The sequence spans 481 residues: MPQTSVVFSSILGPSCSGQVQPGMGERGGGAGGGSGDLIFQDGHLISGSLEALMEHLVPTVDYYPDRTYIFTFLLSSRVFMPPHDLLARVGQICVEQKQQLEAGPEKAKLKSFSAKIVQLLKEWTEAFPYDFQDEKAMAELKAITHRVTQCDEENGTVKKAIAQMTQSLLLSLAARSQLQELREKLRPPAVDKGPILKTKPPAAQKDILGVCCDPLVLAQQLTHIELDRVSSIYPEDLMQIVSHMDSLDNHRCRGDLTKTYSLEAYDNWFNCLSMLVATEVCRVVKKKHRTRMLEFFIDVARECFNIGNFNSMMAIISGMNLSPVARLKKTWSKVKTAKFDVLEHHMDPSSNFCNYRTALQGATQRSQMANSSREKIVIPVFNLFVKDIYFLHKIHTNHLPNGHINFKKFWEISRQIHEFMTWTQVECPFEKDKKIQSYLLTAPIYSEEALFVASFESEGPENHMEKDSWKTLRTTLLNRA.

The 130-residue stretch at 41-170 folds into the N-terminal Ras-GEF domain; it reads QDGHLISGSL…AIAQMTQSLL (130 aa). Residues 214 to 461 enclose the Ras-GEF domain; sequence DPLVLAQQLT…FVASFESEGP (248 aa).

In terms of tissue distribution, detected in brain and spinal cord. Highly expressed in a number of intrahepatic cholangiocarcinoma tissue biopsies.

Its function is as follows. Guanine nucleotide exchange factor (GEF) with specificity for RAP2A, KRAS, HRAS, and NRAS (in vitro). Plays a role in cell migration. This Homo sapiens (Human) protein is Ras-GEF domain-containing family member 1A (RASGEF1A).